Reading from the N-terminus, the 641-residue chain is Mannosyl-oligosaccharide 1,2-alpha-mannosidase IB (641 aa).

The residue at position 2 (Thr2) is an N-acetylthreonine. Over 2 to 36 the chain is Cytoplasmic; sequence TTPALLPLSGRRIPPLNLGPPSFPHHRATLRLSEK. A helical; Signal-anchor for type II membrane protein transmembrane segment spans residues 37–57; that stretch reads FILLLILSAFITLCFGAFFFL. At 58 to 641 the chain is on the lumenal side; it reads PDSSKHKRFD…TTLSGNPAVR (584 aa). The segment at 153–175 is disordered; that stretch reads NKPLPPVPIPNLVGIRGGDPEDN. Cys462 and Cys494 are oxidised to a cystine. Glu508 acts as the Proton donor in catalysis. Thr619 is a Ca(2+) binding site. Asn631 is a glycosylation site (N-linked (GlcNAc...) asparagine).

This sequence belongs to the glycosyl hydrolase 47 family. It depends on Ca(2+) as a cofactor. In terms of tissue distribution, highest levels of expression in placenta and testis.

It is found in the golgi apparatus membrane. The enzyme catalyses N(4)-(alpha-D-Man-(1-&gt;2)-alpha-D-Man-(1-&gt;2)-alpha-D-Man-(1-&gt;3)-[alpha-D-Man-(1-&gt;2)-alpha-D-Man-(1-&gt;3)-[alpha-D-Man-(1-&gt;2)-alpha-D-Man-(1-&gt;6)]-alpha-D-Man-(1-&gt;6)]-beta-D-Man-(1-&gt;4)-beta-D-GlcNAc-(1-&gt;4)-beta-D-GlcNAc)-L-asparaginyl-[protein] (N-glucan mannose isomer 9A1,2,3B1,2,3) + 4 H2O = N(4)-(alpha-D-Man-(1-&gt;3)-[alpha-D-Man-(1-&gt;3)-[alpha-D-Man-(1-&gt;6)]-alpha-D-Man-(1-&gt;6)]-beta-D-Man-(1-&gt;4)-beta-D-GlcNAc-(1-&gt;4)-beta-D-GlcNAc)-L-asparaginyl-[protein] (N-glucan mannose isomer 5A1,2) + 4 beta-D-mannose. It catalyses the reaction N(4)-(alpha-D-Man-(1-&gt;2)-alpha-D-Man-(1-&gt;2)-alpha-D-Man-(1-&gt;3)-[alpha-D-Man-(1-&gt;3)-[alpha-D-Man-(1-&gt;2)-alpha-D-Man-(1-&gt;6)]-alpha-D-Man-(1-&gt;6)]-beta-D-Man-(1-&gt;4)-beta-D-GlcNAc-(1-&gt;4)-beta-D-GlcNAc)-L-asparaginyl-[protein] (N-glucan mannose isomer 8A1,2,3B1,3) + 3 H2O = N(4)-(alpha-D-Man-(1-&gt;3)-[alpha-D-Man-(1-&gt;3)-[alpha-D-Man-(1-&gt;6)]-alpha-D-Man-(1-&gt;6)]-beta-D-Man-(1-&gt;4)-beta-D-GlcNAc-(1-&gt;4)-beta-D-GlcNAc)-L-asparaginyl-[protein] (N-glucan mannose isomer 5A1,2) + 3 beta-D-mannose. Its pathway is protein modification; protein glycosylation. Inhibited by both 1-deoxymannojirimycin and kifunensine. Its function is as follows. Involved in the maturation of Asn-linked oligosaccharides. Progressively trim alpha-1,2-linked mannose residues from Man(9)GlcNAc(2) to produce Man(5)GlcNAc(2). In Homo sapiens (Human), this protein is Mannosyl-oligosaccharide 1,2-alpha-mannosidase IB (MAN1A2).